We begin with the raw amino-acid sequence, 194 residues long: Holliday junction branch migration complex subunit RuvA (194 aa).

The segment at 1–64 is domain I; that stretch reads MIGRLRGILA…EDSVSLYGFL (64 aa). A domain II region spans residues 65-140; sequence REGERRLFRD…RAADFSSGAP (76 aa). Residues 140 to 144 are flexible linker; it reads PITGQ. The interval 145 to 194 is domain III; it reads LGPDAVSEATVALQQLGYKPAEAARMAREAGAEGDEVATVIRKALQAALR.

Belongs to the RuvA family. As to quaternary structure, homotetramer. Forms an RuvA(8)-RuvB(12)-Holliday junction (HJ) complex. HJ DNA is sandwiched between 2 RuvA tetramers; dsDNA enters through RuvA and exits via RuvB. An RuvB hexamer assembles on each DNA strand where it exits the tetramer. Each RuvB hexamer is contacted by two RuvA subunits (via domain III) on 2 adjacent RuvB subunits; this complex drives branch migration. In the full resolvosome a probable DNA-RuvA(4)-RuvB(12)-RuvC(2) complex forms which resolves the HJ.

It localises to the cytoplasm. In terms of biological role, the RuvA-RuvB-RuvC complex processes Holliday junction (HJ) DNA during genetic recombination and DNA repair, while the RuvA-RuvB complex plays an important role in the rescue of blocked DNA replication forks via replication fork reversal (RFR). RuvA specifically binds to HJ cruciform DNA, conferring on it an open structure. The RuvB hexamer acts as an ATP-dependent pump, pulling dsDNA into and through the RuvAB complex. HJ branch migration allows RuvC to scan DNA until it finds its consensus sequence, where it cleaves and resolves the cruciform DNA. The chain is Holliday junction branch migration complex subunit RuvA from Xanthomonas campestris pv. campestris (strain 8004).